Here is a 408-residue protein sequence, read N- to C-terminus: WD repeat-containing protein JIP5 (408 aa).

WD repeat units follow at residues 5-44 (PVGS…DSHN), 50-86 (PSKR…TTDI), 87-130 (DARS…SVKT), 133-172 (QHFD…PKVV), 177-216 (DQED…GDCV), and 221-267 (GHPL…FLGV). A disordered region spans residues 311–408 (VDSDEEEDDE…VIDKDFFDGL (98 aa)). Acidic residues-rich tracts occupy residues 313–339 (SDEE…EDEE) and 356–366 (DESDDEDEEME). Basic and acidic residues predominate over residues 396–408 (KETVIDKDFFDGL).

This sequence belongs to the WD repeat WDR55 family.

The protein localises to the nucleus. It is found in the nucleolus. The sequence is that of WD repeat-containing protein JIP5 (JIP5) from Coprinopsis cinerea (strain Okayama-7 / 130 / ATCC MYA-4618 / FGSC 9003) (Inky cap fungus).